The chain runs to 1381 residues: DNA-directed RNA polymerase subunit beta'' (1381 aa).

Residues cysteine 224, cysteine 295, cysteine 302, and cysteine 305 each contribute to the Zn(2+) site.

Belongs to the RNA polymerase beta' chain family. RpoC2 subfamily. In terms of assembly, in plastids the minimal PEP RNA polymerase catalytic core is composed of four subunits: alpha, beta, beta', and beta''. When a (nuclear-encoded) sigma factor is associated with the core the holoenzyme is formed, which can initiate transcription. Zn(2+) serves as cofactor.

It localises to the plastid. The protein localises to the chloroplast. It catalyses the reaction RNA(n) + a ribonucleoside 5'-triphosphate = RNA(n+1) + diphosphate. Its function is as follows. DNA-dependent RNA polymerase catalyzes the transcription of DNA into RNA using the four ribonucleoside triphosphates as substrates. This Guizotia abyssinica (Niger) protein is DNA-directed RNA polymerase subunit beta''.